The primary structure comprises 95 residues: Secretoglobin family 2A member 2 (95 aa).

The N-terminal stretch at 1 to 18 (MKLVFLFLLVTIPICCYA) is a signal peptide. A glycan (N-linked (GlcNAc...) asparagine) is linked at Asn-35.

It belongs to the secretoglobin family. Lipophilin subfamily. Prostatein is composed of three different peptides called C1, C2 and C3. These form covalent C1:C3 (F) and C2:C3 (S) heterodimers whose non-covalent association forms tetrameric (C1:C3/C3:C2) prostatein molecules. In terms of tissue distribution, highly expressed in ventral prostate.

It is found in the secreted. In terms of biological role, part of prostatein which is the major secretory glycoprotein of ventral prostate gland. Steroid-binding protein; can bind non-polar steroids, cholesterol and a group of small proline-rich peptides. The polypeptide is Secretoglobin family 2A member 2 (Scgb2a2) (Rattus norvegicus (Rat)).